Consider the following 292-residue polypeptide: Probable ABC transporter permease protein YurN (292 aa).

Transmembrane regions (helical) follow at residues 7–27 (IIPY…YIPI), 70–90 (VLYA…LAAV), 106–126 (VFFL…DFIY), 160–180 (VIFV…IVSI), 215–235 (FVAV…PYIL), and 260–280 (MMGY…ALSL). The ABC transmembrane type-1 domain occupies 66–282 (LTNNVLYAVI…IITLALSLMQ (217 aa)).

Belongs to the binding-protein-dependent transport system permease family. MalFG subfamily.

The protein resides in the cell membrane. Functionally, probably part of the binding-protein-dependent transport system YurMNO. Probably responsible for the translocation of the substrate across the membrane. This chain is Probable ABC transporter permease protein YurN (yurN), found in Bacillus subtilis (strain 168).